The following is a 648-amino-acid chain: Protein KASH5 (648 aa).

Residues 1–606 (MHSILRSSLS…HSPGIRISQH (606 aa)) are Cytoplasmic-facing. The tract at residues 206–228 (PEAEESANLESFGGEDPRPEGPA) is disordered. Residues 230 to 420 (AELLSNLEDL…EEQLSQSQEG (191 aa)) are a coiled coil. A compositionally biased stretch (acidic residues) spans 473–497 (EVEPEPEPEPEPEPEPEPQEVEFPS). The interval 473-545 (EVEPEPEPEP…EESWVLADPS (73 aa)) is disordered. The chain crosses the membrane as a helical; Anchor for type IV membrane protein span at residues 607–627 (PLVPTPVLGLLLLLLLSILLF). At 628 to 648 (SQSPPPTWPHLQLYYLQPPPV) the chain is on the perinuclear space side.

Core component the LINC complex which is composed of inner nuclear membrane SUN domain-containing proteins coupled to outer nuclear membrane KASH domain-containing nesprins. SUN and KASH domain-containing proteins seem to bind each other promiscuously; however, differentially expression of LINC complex constituents is giving rise to specific assemblies. At least SUN1/2-containing core LINC complexes are proposed to be hexameric composed of three protomers of each KASH and SUN domain-containing protein. Interacts with SUN1; this interaction mediates its telomere localization by forming a SUN1:KASH5 LINC complex. Component of a probable SUN2:KASH5 LINC complex. Self-associates. Interacts with DYNC1H1, DCTN1, DYNC1I1/2 and PAFAH1B1; suggesting the association with the dynein-dynactin motor complex. As to expression, restricted to the testis and the early ootidogenesis ovary. Expressed in spermatocytes and oocytes (at protein level).

It is found in the nucleus outer membrane. The protein localises to the nucleus. The protein resides in the chromosome. Its subcellular location is the telomere. It localises to the nucleus envelope. In terms of biological role, as a component of the LINC (LInker of Nucleoskeleton and Cytoskeleton) complex, involved in the connection between the nuclear lamina and the cytoskeleton. The nucleocytoplasmic interactions established by the LINC complex play an important role in the transmission of mechanical forces across the nuclear envelope and in nuclear movement and positioning. Required for telomere attachment to nuclear envelope in the prophase of meiosis and for rapid telomere prophase movements implicating a SUN1/2:KASH5 LINC complex in which SUN1 and SUN2 seem to act at least partial redundantly. Required for homolog pairing during meiotic prophase in spermatocytes and probably oocytes. Essential for male and female gametogenesis. Recruits cytoplasmic dynein to telomere attachment sites at the nuclear envelope in spermatocytes. In oocytes is involved in meiotic resumption and spindle formation. This chain is Protein KASH5, found in Mus musculus (Mouse).